Reading from the N-terminus, the 96-residue chain is UPF0235 protein KPK_0722 (96 aa).

This sequence belongs to the UPF0235 family.

This Klebsiella pneumoniae (strain 342) protein is UPF0235 protein KPK_0722.